The primary structure comprises 464 residues: Signal recognition particle 54 kDa protein (464 aa).

Residues 104–111 (GLQGSGKT), 184–188 (DTAGR), and 242–245 (TKLD) contribute to the GTP site.

Belongs to the GTP-binding SRP family. SRP54 subfamily. In terms of assembly, part of the signal recognition particle protein translocation system, which is composed of SRP and FtsY. Archaeal SRP consists of a 7S RNA molecule of 300 nucleotides and two protein subunits: SRP54 and SRP19.

Its subcellular location is the cytoplasm. The enzyme catalyses GTP + H2O = GDP + phosphate + H(+). In terms of biological role, involved in targeting and insertion of nascent membrane proteins into the cytoplasmic membrane. Binds to the hydrophobic signal sequence of the ribosome-nascent chain (RNC) as it emerges from the ribosomes. The SRP-RNC complex is then targeted to the cytoplasmic membrane where it interacts with the SRP receptor FtsY. This Halorubrum lacusprofundi (strain ATCC 49239 / DSM 5036 / JCM 8891 / ACAM 34) protein is Signal recognition particle 54 kDa protein.